A 124-amino-acid polypeptide reads, in one-letter code: Putative outer membrane protein CT_569 (124 aa).

Residues 1–31 (MKKTKKRKQSITLVEMMVVITLIGIIGGALA) form the signal peptide.

The protein resides in the cell outer membrane. The protein is Putative outer membrane protein CT_569 of Chlamydia trachomatis serovar D (strain ATCC VR-885 / DSM 19411 / UW-3/Cx).